A 440-amino-acid polypeptide reads, in one-letter code: MISIKRLSSADTEFDKALSELLAFENTQDAKLEAAVADILAKIRTEGDKALLEYTLRFDRVDAKSAADLELPRNRLQQALHNLPGEQRNALEQAAERVRVYHEKQLTQSWSYVEPDGTHLGQKITPLDRAGLYVPGGKAAYPSSVLMNAIPAKVAGVGELVMVTPTPQGEVNDLVLAAAAICEVDRVFTIGGAQAVGALAYGTPTVPRVDKIVGPGNAYVATAKRHVFGVVGIDMLAGPSEILIICDGKTNPDWIAMDMFSQAEHDELAQAILLSPDLHFIETVAASIVRQLETMPRKEIIRTSLENRSALIQVHDLEEACEIANSIAPEHLELSVEQPEKWVEKIRHAGAIFLGRHTSEALGDYCAGPNHVLPTSRTARFSSPLGVYDFQKRSSIIQVSGQGSAKLGAIASILAQGEGLQAHAMSAEYRYTKKIALGKN.

NAD(+)-binding residues include Tyr133, Gln194, and Asn217. The substrate site is built by Ser240, Gln262, and His265. Zn(2+) is bound by residues Gln262 and His265. Residues Glu330 and His331 each act as proton acceptor in the active site. Positions 331, 364, 418, and 423 each coordinate substrate. Zn(2+) is bound at residue Asp364. His423 is a binding site for Zn(2+).

Belongs to the histidinol dehydrogenase family. Zn(2+) serves as cofactor.

It catalyses the reaction L-histidinol + 2 NAD(+) + H2O = L-histidine + 2 NADH + 3 H(+). It participates in amino-acid biosynthesis; L-histidine biosynthesis; L-histidine from 5-phospho-alpha-D-ribose 1-diphosphate: step 9/9. Its function is as follows. Catalyzes the sequential NAD-dependent oxidations of L-histidinol to L-histidinaldehyde and then to L-histidine. The polypeptide is Histidinol dehydrogenase (Nitrosospira multiformis (strain ATCC 25196 / NCIMB 11849 / C 71)).